Consider the following 360-residue polypeptide: Photosystem II protein D1 (360 aa).

A run of 3 helical transmembrane segments spans residues 29–46 (YIGWFGVLMFPLLLTATT), 118–133 (HFLLGVACYMGREWEL), and 142–156 (WIAVAYSAPVAAATA). His-118 is a binding site for chlorophyll a. Pheophytin a is bound at residue Tyr-126. Residues Asp-170 and Glu-189 each coordinate [CaMn4O5] cluster. Residues 197 to 218 (FHMMGVAGVFGGSLFSAMHGSL) form a helical membrane-spanning segment. Position 198 (His-198) interacts with chlorophyll a. Residues His-215 and 264 to 265 (SF) contribute to the a quinone site. His-215 contributes to the Fe cation binding site. His-272 contributes to the Fe cation binding site. The helical transmembrane segment at 274-288 (FLALWPVVGIWFTAL) threads the bilayer. His-332, Glu-333, Asp-342, and Ala-344 together coordinate [CaMn4O5] cluster. Residues 345 to 360 (SGEVMPVALTAPSINA) constitute a propeptide that is removed on maturation.

This sequence belongs to the reaction center PufL/M/PsbA/D family. PSII is composed of 1 copy each of membrane proteins PsbA, PsbB, PsbC, PsbD, PsbE, PsbF, PsbH, PsbI, PsbJ, PsbK, PsbL, PsbM, PsbT, PsbX, PsbY, PsbZ, Psb30/Ycf12, at least 3 peripheral proteins of the oxygen-evolving complex and a large number of cofactors. It forms dimeric complexes. It depends on The D1/D2 heterodimer binds P680, chlorophylls that are the primary electron donor of PSII, and subsequent electron acceptors. It shares a non-heme iron and each subunit binds pheophytin, quinone, additional chlorophylls, carotenoids and lipids. D1 provides most of the ligands for the Mn4-Ca-O5 cluster of the oxygen-evolving complex (OEC). There is also a Cl(-1) ion associated with D1 and D2, which is required for oxygen evolution. The PSII complex binds additional chlorophylls, carotenoids and specific lipids. as a cofactor. In terms of processing, tyr-161 forms a radical intermediate that is referred to as redox-active TyrZ, YZ or Y-Z. C-terminally processed by CTPA; processing is essential to allow assembly of the oxygen-evolving complex and thus photosynthetic growth.

The protein localises to the plastid. The protein resides in the cyanelle thylakoid membrane. It carries out the reaction 2 a plastoquinone + 4 hnu + 2 H2O = 2 a plastoquinol + O2. Functionally, photosystem II (PSII) is a light-driven water:plastoquinone oxidoreductase that uses light energy to abstract electrons from H(2)O, generating O(2) and a proton gradient subsequently used for ATP formation. It consists of a core antenna complex that captures photons, and an electron transfer chain that converts photonic excitation into a charge separation. The D1/D2 (PsbA/PsbD) reaction center heterodimer binds P680, the primary electron donor of PSII as well as several subsequent electron acceptors. This Cyanophora paradoxa protein is Photosystem II protein D1.